The chain runs to 676 residues: Electrogenic aspartate/glutamate antiporter SLC25A13, mitochondrial (676 aa).

Ala-2 is modified (N-acetylalanine). The regulatory N-terminal domain stretch occupies residues 2 to 295 (AAAKVALTKR…TLADIERIAP (294 aa)). The Mitochondrial intermembrane portion of the chain corresponds to 2–332 (AAAKVALTKR…LLQLAESAYR (331 aa)). EF-hand domains follow at residues 51 to 86 (SQPN…SVLC), 87 to 122 (APDA…TTIH), 125 to 157 (IPFN…FLLE), and 158 to 193 (IQLE…IRPH). Ca(2+) is bound by residues Asp-66, Thr-68, Asp-70, Leu-72, and Glu-77. The linker loop domain stretch occupies residues 296–312 (LEEGMLPFNLAEAQRQQ). The carrier domain stretch occupies residues 322 to 613 (FLLQLAESAY…LQRWFYVDFG (292 aa)). Solcar repeat units lie at residues 327–419 (AESA…VRDK), 427–511 (VPLL…VKAS), and 519–607 (VSPG…LQRW). Residues 333–350 (FGLGSIAGAVGATAVYPI) form a helical membrane-spanning segment. The Mitochondrial matrix segment spans residues 351–393 (DLVKTRMQNQRSTGSFVGELMYKNSFDCFKKVLRYEGFFGLYR). Lys-354 and Lys-373 each carry N6-acetyllysine. The chain crosses the membrane as a helical span at residues 394-413 (GLLPQLLGVAPEKAIKLTVN). At 414-436 (DFVRDKFMHKDGSVPLLAEIFAG) the chain is on the mitochondrial intermembrane side. The helical transmembrane segment at 437–450 (GCAGGSQVIFTNPL) threads the bilayer. The Mitochondrial matrix segment spans residues 451–485 (EIVKIRLQVAGEITTGPRVSALSVVRDLGFFGIYK). Lys-454 carries the post-translational modification N6-methyllysine. N6-acetyllysine; alternate is present on Lys-485. An N6-succinyllysine; alternate modification is found at Lys-485. A helical transmembrane segment spans residues 486 to 505 (GAKACFLRDIPFSAIYFPCY). Topologically, residues 506 to 524 (AHVKASFANEDGQVSPGSL) are mitochondrial intermembrane. A helical transmembrane segment spans residues 525-542 (LLAGAIAGMPAASLVTPA). Topologically, residues 543 to 581 (DVIKTRLQVAARAGQTTYSGVTDCFRKILREEGPKALWK) are mitochondrial matrix. N6-succinyllysine is present on Lys-581. The chain crosses the membrane as a helical span at residues 582-601 (GAGARVFRSSPQFGVTLLTY). Residues 602-676 (ELLQRWFYVD…STSKVTAVGS (75 aa)) lie on the Mitochondrial intermembrane side of the membrane. A C-terminal domain region spans residues 614-676 (GVKPVGSELV…STSKVTAVGS (63 aa)). The residue at position 663 (Lys-663) is an N6-acetyllysine. Ser-667 is modified (phosphoserine).

The protein belongs to the mitochondrial carrier (TC 2.A.29) family. As to quaternary structure, homodimer (via N-terminus).

Its subcellular location is the mitochondrion inner membrane. The enzyme catalyses L-aspartate(in) + L-glutamate(out) + H(+)(out) = L-aspartate(out) + L-glutamate(in) + H(+)(in). It catalyses the reaction 3-sulfino-L-alanine(out) + L-glutamate(in) + H(+)(in) = 3-sulfino-L-alanine(in) + L-glutamate(out) + H(+)(out). The catalysed reaction is 3-sulfino-L-alanine(out) + L-aspartate(in) = 3-sulfino-L-alanine(in) + L-aspartate(out). Its activity is regulated as follows. L-aspartate and 3-sulfino-L-alanine uptake are both inhibited by glisoxepide. In terms of biological role, mitochondrial electrogenic aspartate/glutamate antiporter that favors efflux of aspartate and entry of glutamate and proton within the mitochondria as part of the malate-aspartate shuttle. Also mediates the uptake of L-cysteinesulfinate (3-sulfino-L-alanine) by mitochondria in exchange of L-glutamate and proton. Can also exchange L-cysteinesulfinate with aspartate in their anionic form without any proton translocation. Lacks transport activity towards gamma-aminobutyric acid (GABA). This chain is Electrogenic aspartate/glutamate antiporter SLC25A13, mitochondrial, found in Rattus norvegicus (Rat).